A 457-amino-acid polypeptide reads, in one-letter code: tRNA-2-methylthio-N(6)-dimethylallyladenosine synthase (457 aa).

The region spanning 3 to 120 (KKVYVKTFGC…LPQMIDARRA (118 aa)) is the MTTase N-terminal domain. [4Fe-4S] cluster is bound by residues C12, C49, C83, C157, C161, and C164. In terms of domain architecture, Radical SAM core spans 143–377 (RVEGPSAFVS…QATIEENVAR (235 aa)). Positions 380-447 (QSMVGKVERI…PHSLRGELLL (68 aa)) constitute a TRAM domain.

This sequence belongs to the methylthiotransferase family. MiaB subfamily. In terms of assembly, monomer. It depends on [4Fe-4S] cluster as a cofactor.

Its subcellular location is the cytoplasm. It catalyses the reaction N(6)-dimethylallyladenosine(37) in tRNA + (sulfur carrier)-SH + AH2 + 2 S-adenosyl-L-methionine = 2-methylsulfanyl-N(6)-dimethylallyladenosine(37) in tRNA + (sulfur carrier)-H + 5'-deoxyadenosine + L-methionine + A + S-adenosyl-L-homocysteine + 2 H(+). Functionally, catalyzes the methylthiolation of N6-(dimethylallyl)adenosine (i(6)A), leading to the formation of 2-methylthio-N6-(dimethylallyl)adenosine (ms(2)i(6)A) at position 37 in tRNAs that read codons beginning with uridine. This Burkholderia vietnamiensis (strain G4 / LMG 22486) (Burkholderia cepacia (strain R1808)) protein is tRNA-2-methylthio-N(6)-dimethylallyladenosine synthase.